The chain runs to 149 residues: Transcriptional repressor NrdR (149 aa).

Residues 3–34 (CPFCSATDTKVIDSRLVADGHQVRRRRECVQC) fold into a zinc finger. Residues 49 to 139 (PRVVKQDGSR…VYRAFEDVSE (91 aa)) enclose the ATP-cone domain.

The protein belongs to the NrdR family. Zn(2+) is required as a cofactor.

Negatively regulates transcription of bacterial ribonucleotide reductase nrd genes and operons by binding to NrdR-boxes. The protein is Transcriptional repressor NrdR of Shewanella pealeana (strain ATCC 700345 / ANG-SQ1).